Reading from the N-terminus, the 575-residue chain is Protein NRT1/ PTR FAMILY 5.6 (575 aa).

Helical transmembrane passes span Ala44–Thr64 and Trp88–Gly108. Phosphothreonine is present on Thr112. 10 consecutive transmembrane segments (helical) span residues Val113–Ile133, Val153–Leu173, Phe195–Ala215, Trp223–Ile243, Leu339–Gln359, Ile375–Ile395, Ile420–Leu440, Val457–Gly477, Leu493–Ile513, and Phe541–Lys561.

This sequence belongs to the major facilitator superfamily. Proton-dependent oligopeptide transporter (POT/PTR) (TC 2.A.17) family. In terms of tissue distribution, expressed in stems, shoots, leaves, flowers and siliques.

It localises to the membrane. The protein is Protein NRT1/ PTR FAMILY 5.6 (NPF5.6) of Arabidopsis thaliana (Mouse-ear cress).